We begin with the raw amino-acid sequence, 277 residues long: MNLTIPFAKGHATENDFIIIPDEDARLDLTPEMVVKLCDRRAGIGADGILRVVKAADVEGSTVDPSLWFMDYRNADGSLAEMCGNGVRLFAHWLYSRSLVDNTSFDIGTRAGVRHVDILQADQHSAQVRVDMGIPDVTGLSTCDINGQVFAGLGVDMGNPHLACVVPGLSASALADMELRAPTFDQEFFPHGVNVEIVTELEDDAVSMRVWERGVGETRSCGTGTVAAACAALADAGLGEGTVKVCVPGGEVEVQIFDDGSTLTGPSAIIALGEVQI.

Residues Asn15 and Asn74 each contribute to the substrate site. The active-site Proton donor is Cys83. Substrate is bound by residues 84–85 (GN), Asn159, Asn194, and 212–213 (ER). Cys221 (proton acceptor) is an active-site residue. 222–223 (GT) contacts substrate.

Belongs to the diaminopimelate epimerase family. As to quaternary structure, homodimer.

The protein resides in the cytoplasm. The enzyme catalyses (2S,6S)-2,6-diaminopimelate = meso-2,6-diaminopimelate. It participates in amino-acid biosynthesis; L-lysine biosynthesis via DAP pathway; DL-2,6-diaminopimelate from LL-2,6-diaminopimelate: step 1/1. Its function is as follows. Catalyzes the stereoinversion of LL-2,6-diaminopimelate (L,L-DAP) to meso-diaminopimelate (meso-DAP), a precursor of L-lysine and an essential component of the bacterial peptidoglycan. In Corynebacterium glutamicum (strain R), this protein is Diaminopimelate epimerase.